Consider the following 156-residue polypeptide: Deoxyuridine 5'-triphosphate nucleotidohydrolase (156 aa).

This sequence belongs to the dCTP deaminase family. Archaeal dUTPase subfamily. As to quaternary structure, homotrimer.

The enzyme catalyses dUTP + H2O = dUMP + diphosphate + H(+). The protein operates within pyrimidine metabolism; dUMP biosynthesis; dUMP from dCTP (dUTP route): step 2/2. This enzyme is involved in nucleotide metabolism: it produces dUMP, the immediate precursor of thymidine nucleotides and it decreases the intracellular concentration of dUTP so that uracil cannot be incorporated into DNA. This chain is Deoxyuridine 5'-triphosphate nucleotidohydrolase, found in Methanocaldococcus jannaschii (strain ATCC 43067 / DSM 2661 / JAL-1 / JCM 10045 / NBRC 100440) (Methanococcus jannaschii).